The primary structure comprises 426 residues: Serine--tRNA ligase (426 aa).

228-230 (TSE) lines the L-serine pocket. ATP-binding positions include 259 to 261 (RRE) and Val275. Glu282 is an L-serine binding site. 346 to 349 (ELTS) is a binding site for ATP. Residue Thr386 participates in L-serine binding.

It belongs to the class-II aminoacyl-tRNA synthetase family. Type-1 seryl-tRNA synthetase subfamily. In terms of assembly, homodimer. The tRNA molecule binds across the dimer.

The protein localises to the cytoplasm. The catalysed reaction is tRNA(Ser) + L-serine + ATP = L-seryl-tRNA(Ser) + AMP + diphosphate + H(+). The enzyme catalyses tRNA(Sec) + L-serine + ATP = L-seryl-tRNA(Sec) + AMP + diphosphate + H(+). The protein operates within aminoacyl-tRNA biosynthesis; selenocysteinyl-tRNA(Sec) biosynthesis; L-seryl-tRNA(Sec) from L-serine and tRNA(Sec): step 1/1. Its function is as follows. Catalyzes the attachment of serine to tRNA(Ser). Is also able to aminoacylate tRNA(Sec) with serine, to form the misacylated tRNA L-seryl-tRNA(Sec), which will be further converted into selenocysteinyl-tRNA(Sec). The chain is Serine--tRNA ligase from Arthrobacter sp. (strain FB24).